The sequence spans 363 residues: Phosphoserine aminotransferase (363 aa).

R42 is a binding site for L-glutamate. Pyridoxal 5'-phosphate contacts are provided by residues 76-77 (GR), W102, T156, D175, and Q198. K199 bears the N6-(pyridoxal phosphate)lysine mark. 240–241 (NT) is a pyridoxal 5'-phosphate binding site.

The protein belongs to the class-V pyridoxal-phosphate-dependent aminotransferase family. SerC subfamily. As to quaternary structure, homodimer. The cofactor is pyridoxal 5'-phosphate.

The protein localises to the cytoplasm. The enzyme catalyses O-phospho-L-serine + 2-oxoglutarate = 3-phosphooxypyruvate + L-glutamate. The catalysed reaction is 4-(phosphooxy)-L-threonine + 2-oxoglutarate = (R)-3-hydroxy-2-oxo-4-phosphooxybutanoate + L-glutamate. It participates in amino-acid biosynthesis; L-serine biosynthesis; L-serine from 3-phospho-D-glycerate: step 2/3. It functions in the pathway cofactor biosynthesis; pyridoxine 5'-phosphate biosynthesis; pyridoxine 5'-phosphate from D-erythrose 4-phosphate: step 3/5. Catalyzes the reversible conversion of 3-phosphohydroxypyruvate to phosphoserine and of 3-hydroxy-2-oxo-4-phosphonooxybutanoate to phosphohydroxythreonine. This chain is Phosphoserine aminotransferase, found in Shewanella baltica (strain OS185).